A 763-amino-acid chain; its full sequence is Pentatricopeptide repeat-containing protein At4g32430, mitochondrial (763 aa).

The N-terminal 38 residues, 1–38 (MTLLNYLHCNRSKSFLFQRFYSPYRIAHKLFDGSSQRN), are a transit peptide targeting the mitochondrion. PPR repeat units lie at residues 77-109 (DEVTLCLALKACRGDLKRGCQIHGFSTTSGFTS), 110-140 (FVCVSNAVMGMYRKAGRFDNALCIFENLVDP), 141-172 (DVVSWNTILSGFDDNQIALNFVVRMKSAGVVF), 173-207 (DAFTYSTALSFCVGSEGFLLGLQLQSTVVKTGLES), 208-238 (DLVVGNSFITMYSRSGSFRGARRVFDEMSFK), 239-274 (DMISWNSLLSGLSQEGTFGFEAVVIFRDMMREGVEL), 275-309 (DHVSFTSVITTCCHETDLKLARQIHGLCIKRGYES), 310-344 (LLEVGNILMSRYSKCGVLEAVKSVFHQMSERNVVS), 350-370 (SSNKDDAVSIFLNMRFDGVYP), 371-405 (NEVTFVGLINAVKCNEQIKEGLKIHGLCIKTGFVS), 406-436 (EPSVGNSFITLYAKFEALEDAKKAFEDITFR), 437-471 (EIISWNAMISGFAQNGFSHEALKMFLSAAAETMPN), 472-507 (EYTFGSVLNAIAFAEDISVKQGQRCHAHLLKLGLNS), 508-538 (CPVVSSALLDMYAKRGNIDESEKVFNEMSQK), 539-573 (NQFVWTSIISAYSSHGDFETVMNLFHKMIKENVAP), 574-604 (DLVTFLSVLTACNRKGMVDKGYEIFNMMIEV), and 610-640 (SHEHYSCMVDMLGRAGRLKEAEELMSEVPGG). The type E motif stretch occupies residues 645 to 720 (MLQSMLGSCR…EAGFSWIDVG (76 aa)). The type E(+) motif stretch occupies residues 724-756 (GSLTMQGFSSGDKSHPKSDEIYRMVEIIGLEMN).

This sequence belongs to the PPR family. PCMP-E subfamily.

It is found in the mitochondrion. This is Pentatricopeptide repeat-containing protein At4g32430, mitochondrial (PCMP-E40) from Arabidopsis thaliana (Mouse-ear cress).